A 348-amino-acid polypeptide reads, in one-letter code: MSTIEEQLKALREETLASLKQITAENEKEMQDLRVSVLGKKGSLTEILKGMKDVSAEMRPIIGKHVNEARDVLTAAFEETAKLLEEKKVAAQLASESIDVTLPGRPVAAGHRHVLTQTSEEIEDIFIGMGYQVVDGFEVEQDYYNFERMNLPKDHPARDMQDTFYITEEILLRTHTSPVQARAMDAHDFSKGPLKMISPGRVFRRDTDDATHSHQFHQIEGLVVGKNISMADLQGTLQLIVQKMFGEERQIRLRPSYFPFTEPSVEVDVSCFKCGGEGCNVCKKTGWIEIMGAGMVHPRVLEMSGIDATVYSGFAFGLGQERVAMLRYGINDIRGFYQGDVRFSEQFK.

Glu-262 is a binding site for Mg(2+).

It belongs to the class-II aminoacyl-tRNA synthetase family. Phe-tRNA synthetase alpha subunit type 1 subfamily. Tetramer of two alpha and two beta subunits. Mg(2+) serves as cofactor.

The protein resides in the cytoplasm. The enzyme catalyses tRNA(Phe) + L-phenylalanine + ATP = L-phenylalanyl-tRNA(Phe) + AMP + diphosphate + H(+). This Streptococcus pneumoniae (strain JJA) protein is Phenylalanine--tRNA ligase alpha subunit.